Here is a 67-residue protein sequence, read N- to C-terminus: DNA-directed RNA polymerase subunit omega (67 aa).

The protein belongs to the RNA polymerase subunit omega family. In terms of assembly, the RNAP catalytic core consists of 2 alpha, 1 beta, 1 beta' and 1 omega subunit. When a sigma factor is associated with the core the holoenzyme is formed, which can initiate transcription.

The catalysed reaction is RNA(n) + a ribonucleoside 5'-triphosphate = RNA(n+1) + diphosphate. Its function is as follows. Promotes RNA polymerase assembly. Latches the N- and C-terminal regions of the beta' subunit thereby facilitating its interaction with the beta and alpha subunits. This is DNA-directed RNA polymerase subunit omega from Listeria innocua serovar 6a (strain ATCC BAA-680 / CLIP 11262).